Here is a 488-residue protein sequence, read N- to C-terminus: Receptor-like tyrosine-protein kinase kin-15 (488 aa).

Residues 1-26 (MCLKMRYERIKYILLFSLMHLVYSNS) form the signal peptide. The N-linked (GlcNAc...) asparagine glycan is linked to N25. The Extracellular segment spans residues 27–50 (TFESFTENPHISSQISNVLYMDQM). The helical transmembrane segment at 51-70 (FIIYILICILLILISVIVYL) threads the bilayer. Over 71–488 (SKRYSQQMMQ…SKLEDWIRRD (418 aa)) the chain is Cytoplasmic. One can recognise a Protein kinase domain in the interval 144–458 (EISEDKLGSG…VEFFEEHLSV (315 aa)). Residues 150-158 (LGSGFFGEV) and K183 each bind ATP. Catalysis depends on D319, which acts as the Proton acceptor.

Belongs to the protein kinase superfamily. Tyr protein kinase family. In terms of tissue distribution, hypodermal cells.

It localises to the cell membrane. It carries out the reaction L-tyrosyl-[protein] + ATP = O-phospho-L-tyrosyl-[protein] + ADP + H(+). In terms of biological role, may be specifically involved in cell-cell interactions regulating cell fusions that generate the hypodermis during postembryonic development. It has a role in the development of the HYP7 hypodermal syncytium. This Caenorhabditis elegans protein is Receptor-like tyrosine-protein kinase kin-15 (kin-15).